We begin with the raw amino-acid sequence, 189 residues long: GTP cyclohydrolase 1 (189 aa).

Zn(2+)-binding residues include cysteine 78, histidine 81, and cysteine 150.

Belongs to the GTP cyclohydrolase I family. In terms of assembly, homomer.

It catalyses the reaction GTP + H2O = 7,8-dihydroneopterin 3'-triphosphate + formate + H(+). It functions in the pathway cofactor biosynthesis; 7,8-dihydroneopterin triphosphate biosynthesis; 7,8-dihydroneopterin triphosphate from GTP: step 1/1. This chain is GTP cyclohydrolase 1, found in Listeria monocytogenes serotype 4a (strain HCC23).